The chain runs to 361 residues: Zinc transporter ZIP13 (361 aa).

At 1 to 6 (MPGCPC) the chain is on the lumenal side. The helical transmembrane segment at 7 to 27 (PGCGMAGQRLLFLTVLALELL) threads the bilayer. At 28-68 (ERAGGSQPALRSLGAAAACRLDSKESESWGALLSGERLDTW) the chain is on the cytoplasmic side. A helical membrane pass occupies residues 69 to 89 (ICSLLGSLMVGLSGVFPLLVI). Residues 90-108 (PLEMGTMLQSEAGAWRLKQ) are Lumenal-facing. A helical membrane pass occupies residues 109 to 129 (LLSFALGGLLGNVFLHLLPEA). Topologically, residues 130–150 (WAYTCNISPGVEGQSLQRQQQ) are cytoplasmic. Residues 151–171 (LGLWVIAGFLTFLALEKMFLN) form a helical membrane-spanning segment. Residues 172–233 (CKEEDPSQAP…TIDNFTHGLA (62 aa)) lie on the Lumenal side of the membrane. Residues 234-254 (VAASFLVSKKIGLLTTMAILL) form a helical membrane-spanning segment. The XEXPHE-motif signature appears at 255 to 260 (HEIPHE). The Cytoplasmic portion of the chain corresponds to 255–276 (HEIPHEVGDFAILLRAGFDRWT). Residues 277-297 (AAKLQFSTALGGLLGACFAIC) form a helical membrane-spanning segment. Residues 298-307 (TQSPKGVEET) are Lumenal-facing. Residues 308-328 (VVWTLPFTSGGFLYVALVNVL) form a helical membrane-spanning segment. Residues 329–340 (PDLLEEDDPWHL) lie on the Cytoplasmic side of the membrane. A helical transmembrane segment spans residues 341–361 (NPPLPTGTPCSRCCCSAPVSW).

It belongs to the ZIP transporter (TC 2.A.5) family. In terms of assembly, homodimer.

It localises to the golgi apparatus membrane. It is found in the cytoplasmic vesicle membrane. The protein resides in the endoplasmic reticulum membrane. It carries out the reaction Zn(2+)(in) = Zn(2+)(out). Its function is as follows. Functions as a zinc transporter transporting Zn(2+) from the Golgi apparatus to the cytosol and thus influences the zinc level at least in areas of the cytosol. May regulate beige adipocyte differentiation. This is Zinc transporter ZIP13 from Rattus norvegicus (Rat).